Consider the following 364-residue polypeptide: Glycine oxidase (364 aa).

FAD is bound by residues 12–13 (VI), 32–33 (ER), 40–41 (AS), 45–47 (GGI), and V173. Position 302 (R302) interacts with substrate. An FAD-binding site is contributed by 327–333 (HYRNGLV).

It belongs to the DAO family. ThiO subfamily. As to quaternary structure, monomer. The cofactor is FAD.

The catalysed reaction is glycine + O2 + H2O = glyoxylate + H2O2 + NH4(+). It catalyses the reaction sarcosine + O2 + H2O = methylamine + glyoxylate + H2O2. It participates in cofactor biosynthesis; thiamine diphosphate biosynthesis. Its function is as follows. Catalyzes the oxidation of glycine, leading to glyoxyl imine and hydrogen peroxide as primary products; glyoxyl imine is used for the biosynthesis of the thiazole ring of thiamine. Otherwise, glyoxyl imine is spontaneously hydrolyzed in water to produce glyoxylate and ammonia. Can also use sarcosine (N-methylglycine) as substrate. The protein is Glycine oxidase of Pseudomonas aeruginosa (strain ATCC 15692 / DSM 22644 / CIP 104116 / JCM 14847 / LMG 12228 / 1C / PRS 101 / PAO1).